We begin with the raw amino-acid sequence, 126 residues long: Sperm-specific H1/protamine-like protein type 2 (126 aa).

The region spanning Lys5–Lys84 is the H15 domain. The tract at residues Ser74–Asn126 is disordered. Residues Lys90–Lys120 are compositionally biased toward basic residues.

Post-translationally, OE2 and OE3 are produced by post-translational cleavage of a common precursor. In terms of tissue distribution, sperm.

It is found in the nucleus. The protein localises to the chromosome. In terms of biological role, linker histones are implicated in chromatin remodeling and/or transcriptional regulation during spermiogenesis, the process of spermatid maturation into spermatozoa. Protamines substitute for histones in the chromatin of sperm during the haploid phase of spermatogenesis. They compact sperm DNA into a highly condensed, stable and inactive complex. The polypeptide is Sperm-specific H1/protamine-like protein type 2 (Ostrea edulis (Native oyster)).